The chain runs to 248 residues: 4-hydroxy-tetrahydrodipicolinate reductase (248 aa).

Residues aspartate 32, 74-76, and 99-102 contribute to the NAD(+) site; these read GTT and SANF. Catalysis depends on histidine 134, which acts as the Proton donor/acceptor. Histidine 135 serves as a coordination point for (S)-2,3,4,5-tetrahydrodipicolinate. Lysine 138 acts as the Proton donor in catalysis. Position 144–145 (144–145) interacts with (S)-2,3,4,5-tetrahydrodipicolinate; it reads GT.

This sequence belongs to the DapB family.

The protein localises to the cytoplasm. The catalysed reaction is (S)-2,3,4,5-tetrahydrodipicolinate + NAD(+) + H2O = (2S,4S)-4-hydroxy-2,3,4,5-tetrahydrodipicolinate + NADH + H(+). It catalyses the reaction (S)-2,3,4,5-tetrahydrodipicolinate + NADP(+) + H2O = (2S,4S)-4-hydroxy-2,3,4,5-tetrahydrodipicolinate + NADPH + H(+). It participates in amino-acid biosynthesis; L-lysine biosynthesis via DAP pathway; (S)-tetrahydrodipicolinate from L-aspartate: step 4/4. Its function is as follows. Catalyzes the conversion of 4-hydroxy-tetrahydrodipicolinate (HTPA) to tetrahydrodipicolinate. The chain is 4-hydroxy-tetrahydrodipicolinate reductase from Chlorobium luteolum (strain DSM 273 / BCRC 81028 / 2530) (Pelodictyon luteolum).